The following is a 181-amino-acid chain: Large ribosomal subunit protein uL5 (181 aa).

This sequence belongs to the universal ribosomal protein uL5 family. In terms of assembly, part of the 50S ribosomal subunit; part of the 5S rRNA/L5/L18/L25 subcomplex. Contacts the 5S rRNA and the P site tRNA. Forms a bridge to the 30S subunit in the 70S ribosome.

In terms of biological role, this is one of the proteins that bind and probably mediate the attachment of the 5S RNA into the large ribosomal subunit, where it forms part of the central protuberance. In the 70S ribosome it contacts protein S13 of the 30S subunit (bridge B1b), connecting the 2 subunits; this bridge is implicated in subunit movement. Contacts the P site tRNA; the 5S rRNA and some of its associated proteins might help stabilize positioning of ribosome-bound tRNAs. In Helicobacter hepaticus (strain ATCC 51449 / 3B1), this protein is Large ribosomal subunit protein uL5.